The following is a 225-amino-acid chain: NAD(P)H-quinone oxidoreductase subunit K, chloroplastic (225 aa).

[4Fe-4S] cluster-binding residues include Cys43, Cys44, Cys108, and Cys139.

It belongs to the complex I 20 kDa subunit family. As to quaternary structure, NDH is composed of at least 16 different subunits, 5 of which are encoded in the nucleus. The cofactor is [4Fe-4S] cluster.

It localises to the plastid. Its subcellular location is the chloroplast thylakoid membrane. The catalysed reaction is a plastoquinone + NADH + (n+1) H(+)(in) = a plastoquinol + NAD(+) + n H(+)(out). It catalyses the reaction a plastoquinone + NADPH + (n+1) H(+)(in) = a plastoquinol + NADP(+) + n H(+)(out). NDH shuttles electrons from NAD(P)H:plastoquinone, via FMN and iron-sulfur (Fe-S) centers, to quinones in the photosynthetic chain and possibly in a chloroplast respiratory chain. The immediate electron acceptor for the enzyme in this species is believed to be plastoquinone. Couples the redox reaction to proton translocation, and thus conserves the redox energy in a proton gradient. The protein is NAD(P)H-quinone oxidoreductase subunit K, chloroplastic of Populus trichocarpa (Western balsam poplar).